The chain runs to 239 residues: 7-cyano-7-deazaguanine synthase (239 aa).

12–22 (FSGGQDSATCL) lines the ATP pocket. Zn(2+) contacts are provided by Cys-200, Cys-215, Cys-218, and Cys-221.

The protein belongs to the QueC family. Zn(2+) is required as a cofactor.

It catalyses the reaction 7-carboxy-7-deazaguanine + NH4(+) + ATP = 7-cyano-7-deazaguanine + ADP + phosphate + H2O + H(+). Its pathway is purine metabolism; 7-cyano-7-deazaguanine biosynthesis. Its function is as follows. Catalyzes the ATP-dependent conversion of 7-carboxy-7-deazaguanine (CDG) to 7-cyano-7-deazaguanine (preQ(0)). The polypeptide is 7-cyano-7-deazaguanine synthase (Hyphomonas neptunium (strain ATCC 15444)).